Here is a 343-residue protein sequence, read N- to C-terminus: Mitochondrial import inner membrane translocase subunit TIM50-A (343 aa).

The Mitochondrial matrix portion of the chain corresponds to 1–57 (MHKIVWFGTLNKSIGYIGKKKTCLLSPCEKICLNSARKTVQRCDKNYSPPKLRRIKN). The helical transmembrane segment at 58–77 (FYTYSVVLGSLFSIVMWAIY) threads the bilayer. The Mitochondrial intermembrane portion of the chain corresponds to 78–343 (KLGKPEEDHR…GRSLRGSSIK (266 aa)). Positions 135 to 278 (YIQPPYSLVL…FDLTAFLQLI (144 aa)) constitute an FCP1 homology domain.

Belongs to the TIM50 family. Component of the TIM23 complex at least composed of Tim23, Tim17 (Tim17a1, Tim17a2 or Tim17b1) and a Tim50. In terms of tissue distribution, exclusively expressed in the testis.

Its subcellular location is the mitochondrion inner membrane. Essential component of the TIM23 complex, a complex that mediates the translocation of transit peptide-containing proteins across the mitochondrial inner membrane. This is Mitochondrial import inner membrane translocase subunit TIM50-A (ttm3) from Drosophila melanogaster (Fruit fly).